We begin with the raw amino-acid sequence, 556 residues long: Phosphoacetylglucosamine mutase (556 aa).

Residue Ser68 is the Phosphoserine intermediate of the active site. Mg(2+) is bound by residues Ser68, Asp286, Asp288, and Asp290. Ser68 carries the post-translational modification Phosphoserine. Substrate-binding positions include 386–388 (EAN), 518–522 (RPSGT), and Arg527.

It belongs to the phosphohexose mutase family. It depends on Mg(2+) as a cofactor.

The enzyme catalyses N-acetyl-alpha-D-glucosamine 1-phosphate = N-acetyl-D-glucosamine 6-phosphate. It functions in the pathway nucleotide-sugar biosynthesis; UDP-N-acetyl-alpha-D-glucosamine biosynthesis; N-acetyl-alpha-D-glucosamine 1-phosphate from alpha-D-glucosamine 6-phosphate (route I): step 2/2. Its function is as follows. Interconverts GlcNAc-6-P and GlcNAc-1-P. This Arabidopsis thaliana (Mouse-ear cress) protein is Phosphoacetylglucosamine mutase (DRT101).